Reading from the N-terminus, the 627-residue chain is MRRPKKYESGEATQYISRRAALRKLQLSLNDFRRLCILKGVYPREPKHRRRAQKGSSEIKVLYHTKDIRFLLHESIVWTLRDYKIFAKKSNRDRAIKDFRNLKRRLALFPEIKLDHIVKERYPTFIDALKDLDDCLTLLFLFSTFPSLHLIPREQSNLCRRLTIEFLHYVIASKSLRKVFISIKGYYFQAEIKGQKVTWIVPHYYPFKPQSRQEVDFKVMSIFVEFYTIMLGFTNFRLFHGLNLAYPPQFPSSVLQDSEESLKDEASFVSDRIAALNFELLRTDKVQEDEEELDIDMELLEQDGDSKRIIKMKQEAQEVSRLRTLFKGLKFFINREVPREPLVILIRSFGGKVSWDSSIFAGSTYDEGDETITHQIVDRPSISTQYISRDYIQPQWVFDCVNQRQLLPTNKYFIGETLPPHLSPFVDSKRDSYIPPEEKALLDPSLIETHAQSDDDSEDEAQEEEETVDQELLDAQLQLAYQQETAEYKKYGGPDGVNEDEEDPEDEDDNEDDDEEEEELDEKTKRLQEEKQKMSVQSGKVHKVNKRQVHKAEVDEHRLQARMVKPRHRNLFRKLIREKQSKEKEEWLLRKKRRTIEASEKEARKTAKREARKEAAAAAAKASKLGK.

Positions 321–414 (RLRTLFKGLK…QLLPTNKYFI (94 aa)) constitute a BRCT domain. Disordered regions lie at residues 450 to 469 (HAQS…ETVD), 488 to 566 (YKKY…MVKP), and 595 to 627 (TIEA…KLGK). Residues serine 453 and serine 457 each carry the phosphoserine modification. Composition is skewed to acidic residues over residues 454-469 (DDDS…ETVD) and 497-521 (VNED…EELD). Over residues 522–533 (EKTKRLQEEKQK) the composition is skewed to basic and acidic residues. A compositionally biased stretch (basic residues) spans 540-549 (KVHKVNKRQV). Basic and acidic residues-rich tracts occupy residues 550-559 (HKAEVDEHRL) and 595-615 (TIEA…RKEA). A coiled-coil region spans residues 582-625 (KEKEEWLLRKKRRTIEASEKEARKTAKREARKEAAAAAAKASKL). Over residues 616-627 (AAAAAKASKLGK) the composition is skewed to low complexity.

It belongs to the pescadillo family.

It localises to the nucleus. Its subcellular location is the nucleolus. The protein resides in the nucleoplasm. Functionally, required for maturation of ribosomal RNAs and formation of the large ribosomal subunit. In Drosophila simulans (Fruit fly), this protein is Pescadillo homolog.